The sequence spans 304 residues: Bifunctional protein FolD (304 aa).

NADP(+)-binding positions include 176–178 (GAS), isoleucine 201, and isoleucine 242.

It belongs to the tetrahydrofolate dehydrogenase/cyclohydrolase family. As to quaternary structure, homodimer.

The catalysed reaction is (6R)-5,10-methylene-5,6,7,8-tetrahydrofolate + NADP(+) = (6R)-5,10-methenyltetrahydrofolate + NADPH. It catalyses the reaction (6R)-5,10-methenyltetrahydrofolate + H2O = (6R)-10-formyltetrahydrofolate + H(+). It participates in one-carbon metabolism; tetrahydrofolate interconversion. In terms of biological role, catalyzes the oxidation of 5,10-methylenetetrahydrofolate to 5,10-methenyltetrahydrofolate and then the hydrolysis of 5,10-methenyltetrahydrofolate to 10-formyltetrahydrofolate. The sequence is that of Bifunctional protein FolD from Gluconobacter oxydans (strain 621H) (Gluconobacter suboxydans).